The chain runs to 139 residues: Large ribosomal subunit protein uL16 (139 aa).

Belongs to the universal ribosomal protein uL16 family. In terms of assembly, part of the 50S ribosomal subunit.

In terms of biological role, binds 23S rRNA and is also seen to make contacts with the A and possibly P site tRNAs. The chain is Large ribosomal subunit protein uL16 from Chlorobium phaeobacteroides (strain BS1).